The following is a 429-amino-acid chain: 3-phosphoshikimate 1-carboxyvinyltransferase (429 aa).

Positions 11, 12, and 16 each coordinate 3-phosphoshikimate. A phosphoenolpyruvate-binding site is contributed by Lys-11. Phosphoenolpyruvate-binding residues include Gly-82 and Arg-110. Residues Ser-155, Gln-157, Asp-302, and Lys-329 each contribute to the 3-phosphoshikimate site. A phosphoenolpyruvate-binding site is contributed by Gln-157. Asp-302 serves as the catalytic Proton acceptor. Phosphoenolpyruvate is bound by residues Arg-333 and Arg-385.

The protein belongs to the EPSP synthase family. As to quaternary structure, monomer.

It is found in the cytoplasm. The catalysed reaction is 3-phosphoshikimate + phosphoenolpyruvate = 5-O-(1-carboxyvinyl)-3-phosphoshikimate + phosphate. It participates in metabolic intermediate biosynthesis; chorismate biosynthesis; chorismate from D-erythrose 4-phosphate and phosphoenolpyruvate: step 6/7. Functionally, catalyzes the transfer of the enolpyruvyl moiety of phosphoenolpyruvate (PEP) to the 5-hydroxyl of shikimate-3-phosphate (S3P) to produce enolpyruvyl shikimate-3-phosphate and inorganic phosphate. The protein is 3-phosphoshikimate 1-carboxyvinyltransferase of Helicobacter pylori (strain Shi470).